A 445-amino-acid polypeptide reads, in one-letter code: Oxysterols receptor LXR-alpha (445 aa).

2 disordered regions span residues methionine 1 to asparagine 34 and threonine 62 to proline 86. A transactivation AF-1; required for ligand-independent transactivation function region spans residues methionine 1–glutamate 94. The segment at residues asparagine 93–serine 168 is a DNA-binding region (nuclear receptor). 2 NR C4-type zinc fingers span residues cysteine 96–cysteine 116 and cysteine 132–cysteine 156. A disordered region spans residues lysine 178–valine 200. A compositionally biased stretch (low complexity) spans serine 189–valine 200. Serine 191 bears the Phosphoserine mark. Residues glutamine 203–glutamate 445 form a transactivation AF-2; required for ligand-dependent transactivation function; mediates interaction with CCAR2 region. Positions glutamate 207–glutamate 445 constitute an NR LBD domain.

It belongs to the nuclear hormone receptor family. NR1 subfamily. As to quaternary structure, heterodimer of NR1H3 and RXR (retinoic acid receptor). Interacts with CCAR2 (via N-terminus) in a ligand-independent manner. Interacts with SIRT1 and this interaction is inhibited by CCAR2. In terms of processing, ubiquitinated by UBR5, leading to its degradation: UBR5 specifically recognizes and binds ligand-bound NR1H3 when it is not associated with coactivators (NCOAs). In presence of NCOAs, the UBR5-degron is not accessible, preventing its ubiquitination and degradation. In terms of tissue distribution, in adults it is expressed in spleen, pituitary, lung, liver, and fat. Weaker expression is observed in several other tissues.

It is found in the nucleus. It localises to the cytoplasm. Nuclear receptor that exhibits a ligand-dependent transcriptional activation activity. Interaction with retinoic acid receptor (RXR) shifts RXR from its role as a silent DNA-binding partner to an active ligand-binding subunit in mediating retinoid responses through target genes defined by LXRES. LXRES are DR4-type response elements characterized by direct repeats of two similar hexanuclotide half-sites spaced by four nucleotides. Plays an important role in the regulation of cholesterol homeostasis, regulating cholesterol uptake through MYLIP-dependent ubiquitination of LDLR, VLDLR and LRP8. Interplays functionally with RORA for the regulation of genes involved in liver metabolism. Induces LPCAT3-dependent phospholipid remodeling in endoplasmic reticulum (ER) membranes of hepatocytes, driving SREBF1 processing and lipogenesis. Via LPCAT3, triggers the incorporation of arachidonate into phosphatidylcholines of ER membranes, increasing membrane dynamics and enabling triacylglycerols transfer to nascent very low-density lipoprotein (VLDL) particles. Via LPCAT3 also counteracts lipid-induced ER stress response and inflammation, likely by modulating SRC kinase membrane compartmentalization and limiting the synthesis of lipid inflammatory mediators. This Rattus norvegicus (Rat) protein is Oxysterols receptor LXR-alpha (Nr1h3).